Reading from the N-terminus, the 56-residue chain is Turripeptide XIV-01 (56 aa).

Positions 1–21 (MRFHVLLTVALLLTSLMSIEA) are cleaved as a signal peptide. The propeptide occupies 22–30 (KPVNGAEME).

Post-translationally, contains 2 disulfide bonds. In terms of tissue distribution, expressed by the venom duct.

It is found in the secreted. The chain is Turripeptide XIV-01 from Gemmula speciosa (Splendid gem-turris).